Reading from the N-terminus, the 288-residue chain is Probable sulfate transport system permease protein cysT (288 aa).

A run of 8 helical transmembrane segments spans residues 2 to 22 (IPLFFIPPFIILFITKGKFRF), 28 to 48 (LVLACALHYGTFILALPIFFL), 77 to 97 (FLTALLATIINAIFGLILAWV), 112 to 132 (TVDLPFALPTSVGGLTLMTVF), 149 to 169 (IVFNPIGVLLAMIFVSLPFVV), 196 to 218 (TTFWHILFPPLTPSLLTGTTLGF), 227 to 247 (SIVLIASNIPMKDLVISVLLF), and 257 to 277 (SATIIASFVLIISFTALFFIN). Positions 73–277 (YGFTFLTALL…ISFTALFFIN (205 aa)) constitute an ABC transmembrane type-1 domain.

The protein belongs to the binding-protein-dependent transport system permease family. CysTW subfamily.

The protein localises to the plastid. Its subcellular location is the chloroplast membrane. In terms of biological role, part of the ABC transporter complex cysAWTP (TC 3.A.1.6.1) involved in sulfate/thiosulfate import. Probably responsible for the translocation of the substrate across the membrane. This is Probable sulfate transport system permease protein cysT (cysT) from Marchantia polymorpha (Common liverwort).